The chain runs to 414 residues: Gamma-glutamyl phosphate reductase (414 aa).

The protein belongs to the gamma-glutamyl phosphate reductase family.

Its subcellular location is the cytoplasm. It catalyses the reaction L-glutamate 5-semialdehyde + phosphate + NADP(+) = L-glutamyl 5-phosphate + NADPH + H(+). The protein operates within amino-acid biosynthesis; L-proline biosynthesis; L-glutamate 5-semialdehyde from L-glutamate: step 2/2. Its function is as follows. Catalyzes the NADPH-dependent reduction of L-glutamate 5-phosphate into L-glutamate 5-semialdehyde and phosphate. The product spontaneously undergoes cyclization to form 1-pyrroline-5-carboxylate. This Clostridium botulinum (strain Eklund 17B / Type B) protein is Gamma-glutamyl phosphate reductase.